Consider the following 104-residue polypeptide: Integration host factor subunit alpha (104 aa).

A disordered region spans residues 51-70 (GNFQLRDKPQRPGRNPKTGE).

The protein belongs to the bacterial histone-like protein family. In terms of assembly, heterodimer of an alpha and a beta chain.

This protein is one of the two subunits of integration host factor, a specific DNA-binding protein that functions in genetic recombination as well as in transcriptional and translational control. This is Integration host factor subunit alpha from Ralstonia nicotianae (strain ATCC BAA-1114 / GMI1000) (Ralstonia solanacearum).